Consider the following 273-residue polypeptide: Proteasome subunit beta type-10 (273 aa).

The residue at position 1 (M1) is an N-acetylmethionine. Positions 1 to 39 are cleaved as a propeptide — removed in mature form; that stretch reads MLKQAVEPTGGFSFENCQRNASLEHVLPGLRVPHARKTG. The Nucleophile role is filled by T40.

This sequence belongs to the peptidase T1B family. The 26S proteasome consists of a 20S proteasome core and two 19S regulatory subunits. The 20S proteasome core is composed of 28 subunits that are arranged in four stacked rings, resulting in a barrel-shaped structure. The two end rings are each formed by seven alpha subunits, and the two central rings are each formed by seven beta subunits. The catalytic chamber with the active sites is on the inside of the barrel. Component of the immunoproteasome, where it displaces the equivalent housekeeping subunit PSMB7. Component of the spermatoproteasome, a form of the proteasome specifically found in testis. In terms of processing, autocleaved. The resulting N-terminal Thr residue of the mature subunit is responsible for the nucleophile proteolytic activity. As to expression, detected in liver (at protein level).

The protein localises to the cytoplasm. It localises to the nucleus. The enzyme catalyses Cleavage of peptide bonds with very broad specificity.. The proteasome is a multicatalytic proteinase complex which is characterized by its ability to cleave peptides with Arg, Phe, Tyr, Leu, and Glu adjacent to the leaving group at neutral or slightly basic pH. The proteasome has an ATP-dependent proteolytic activity. This subunit is involved in antigen processing to generate class I binding peptides. Plays a role in determining the T-cell repertoire for an antiviral T-cell response. The protein is Proteasome subunit beta type-10 (Psmb10) of Mus musculus (Mouse).